The chain runs to 413 residues: MNIIKELEWRGLVKQITNEERLLKAQNDGAAVYCGFDPTADSLHVGHLMMIVTLKRFDKAGFQAIGLIGGGTGMIGDPSFKADERKLQTDEQVKFHATAIQNQLLRIIPDVTFANNVDWLGNMSLIDFLRDVGKDFNISYLLNKDSIATRISTGLSVTEFSYTMLQAYDFYNLYINHNCKVQIGGSDQWGNITSGTDYISTRVGSANTEAAGFTIPLLTKSDGQKFGKTESGAVWLDSNKTSVYDFYQFWINQDDNDCVKMLKYLTFLTKEEIDELEAKHKEAPHLRTMQKTLASEITKFVHGDKELNKAIKLTDAFFTGNILNLDDDLLELAIKSIPTIQLEKTTSAIDAIVNVNAASSKREAREFINAKAISFNDVAVQDENMLLSEIKTIKNNKIIVKKGKKKYYLLEIK.

Tyr33 is a binding site for L-tyrosine. A 'HIGH' region motif is present at residues 38-47 (PTADSLHVGH). L-tyrosine-binding residues include Tyr162 and Gln166. Positions 225–229 (KFGKT) match the 'KMSKS' region motif. Lys228 serves as a coordination point for ATP. Residues 346-413 (TSAIDAIVNV…KKKYYLLEIK (68 aa)) form the S4 RNA-binding domain.

This sequence belongs to the class-I aminoacyl-tRNA synthetase family. TyrS type 1 subfamily. In terms of assembly, homodimer.

The protein localises to the cytoplasm. The enzyme catalyses tRNA(Tyr) + L-tyrosine + ATP = L-tyrosyl-tRNA(Tyr) + AMP + diphosphate + H(+). Its function is as follows. Catalyzes the attachment of tyrosine to tRNA(Tyr) in a two-step reaction: tyrosine is first activated by ATP to form Tyr-AMP and then transferred to the acceptor end of tRNA(Tyr). The chain is Tyrosine--tRNA ligase from Mesoplasma florum (strain ATCC 33453 / NBRC 100688 / NCTC 11704 / L1) (Acholeplasma florum).